The following is a 175-amino-acid chain: Dof zinc finger protein DOF1.5 (175 aa).

The interval 29–57 is disordered; that stretch reads EEQQQQQQPELQATTAVRSPSSDLTAEKR. A compositionally biased stretch (polar residues) spans 37 to 52; it reads PELQATTAVRSPSSDL. The Dof-type zinc finger occupies 62-116; sequence IPCPRCKSMETKFCYFNNYNVNQPRHFCKGCQRYWTAGGALRNVPVGAGRRKSKP. Residues cysteine 64, cysteine 67, cysteine 89, and cysteine 92 each contribute to the Zn(2+) site. Positions 162 to 168 match the Nuclear localization signal motif; the sequence is PVKRLRC.

It localises to the nucleus. Transcription factor that binds specifically to a 5'-AA[AG]G-3' consensus core sequence. Acts as a negative regulator in the phytochrome-mediated light responses. Controls phyB-mediated end-of-day response and the phyA-mediated anthocyanin accumulation. Not involved in direct flowering time regulation. This chain is Dof zinc finger protein DOF1.5 (DOF1.5), found in Arabidopsis thaliana (Mouse-ear cress).